A 1671-amino-acid polypeptide reads, in one-letter code: AF4/FMR2 family member lilli (1671 aa).

6 disordered regions span residues 53–79 (YSQNYNMEEYERRKRREREKIERQQGI), 126–304 (SAPG…EKDV), 393–599 (LAGE…SNKW), 723–761 (DSGTSASGSSSSSSSSSDSAVGGEVVPMPGPGETFQLPG), 774–1162 (PTQS…TTPH), and 1185–1311 (KLTP…LQIG). Over residues 70 to 79 (REKIERQQGI) the composition is skewed to basic and acidic residues. Composition is skewed to low complexity over residues 145–179 (SLGHSPSSASSAAGPTSASATTALPGQQQHYQQQQ) and 210–242 (PSSSGMAPPRGPPRSSSSNSNSSSATNNASSGG). Thr416 is modified (phosphothreonine). A compositionally biased stretch (basic and acidic residues) spans 424-437 (LKTEKNHSLEKQDS). Positions 439–450 (LENDLELSESED) are enriched in acidic residues. Residues Ser446 and Ser448 each carry the phosphoserine modification. Residues 459 to 479 (SAGNSSNSSESDSSESGSESS) are compositionally biased toward low complexity. A compositionally biased stretch (basic residues) spans 487–496 (HPNHQQHHHQ). Low complexity-rich tracts occupy residues 497–522 (LQQQQQASMQQQQVLQQQQQHRPQPL) and 561–587 (PAGVNSSAVMGAGSVSGGTLSSGGSSS). The span at 588 to 599 (NKTPSPTESNKW) shows a compositional bias: polar residues. The span at 723 to 755 (DSGTSASGSSSSSSSSSDSAVGGEVVPMPGPGE) shows a compositional bias: low complexity. Residues 774–786 (PTQSQKAPPSNSV) are compositionally biased toward polar residues. Residues 800-810 (QRQKKPRKKKA) are compositionally biased toward basic residues. Phosphoserine occurs at positions 819 and 820. Positions 849–861 (KKGRGRPRKQQQS) form a DNA-binding region, a.T hook. Low complexity predominate over residues 858–896 (QQQSGGSGNLSSASAGSSSQTKGPTLTAAKKPLAKTPLA). Residues Ser869 and Ser871 each carry the phosphoserine modification. Positions 907 to 917 (SQSSSNGNTPT) are enriched in polar residues. 2 stretches are compositionally biased toward low complexity: residues 947–963 (SSSAESSSKSSSSSSSS) and 988–1002 (ALLGSGSSSASSSGS). The span at 1009-1020 (SRSQVGSGQALA) shows a compositional bias: polar residues. Residues 1032–1058 (SQHSQHLSSSECSSSSGGCTAVCSSSS) show a composition bias toward low complexity. Over residues 1063–1080 (EGRREKERERKPKSDKNK) the composition is skewed to basic and acidic residues. Residues 1120 to 1130 (QPPPPHAPPAA) show a composition bias toward pro residues. The segment covering 1188-1203 (PAQQNGHLTPKDQATN) has biased composition (polar residues). Basic and acidic residues-rich tracts occupy residues 1224 to 1241 (EHPVKPEPELDAGYEAKF) and 1250 to 1280 (FQLKQERDRDRERERERERERERDREREQPP). Ser1360 carries the phosphoserine modification. Thr1362 carries the post-translational modification Phosphothreonine. The span at 1562–1581 (NTPSSISPSNSVGSQGSGSN) shows a compositional bias: low complexity. Residues 1562-1586 (NTPSSISPSNSVGSQGSGSNTPPGR) form a disordered region.

Belongs to the AF4 family.

It localises to the nucleus. In terms of biological role, has a role in transcriptional regulation. Acts in parallel with the Ras/MAPK and the PI3K/PKB pathways in the control of cell identity and cellular growth. Essential for regulation of the cytoskeleton and cell growth but not for cell proliferation or growth rate. Required specifically for the microtubule-based basal transport of lipid droplets. Plays a partially redundant function downstream of Raf in cell fate specification in the developing eye. Pair-rule protein that regulates embryonic cellularization, gastrulation and segmentation. This is AF4/FMR2 family member lilli from Drosophila yakuba (Fruit fly).